Here is an 89-residue protein sequence, read N- to C-terminus: Phosphocarrier protein HPr (89 aa).

Residues 1–89 (MERTVTVVPE…DILSTPEAKQ (89 aa)) form the HPr domain. His14 (pros-phosphohistidine intermediate) is an active-site residue. At Ser47 the chain carries Phosphoserine; by HPrK/P.

This sequence belongs to the HPr family.

Its subcellular location is the cytoplasm. Its activity is regulated as follows. Phosphorylation on Ser-47 inhibits the phosphoryl transfer from enzyme I to HPr. Functionally, general (non sugar-specific) component of the phosphoenolpyruvate-dependent sugar phosphotransferase system (sugar PTS). This major carbohydrate active-transport system catalyzes the phosphorylation of incoming sugar substrates concomitantly with their translocation across the cell membrane. The phosphoryl group from phosphoenolpyruvate (PEP) is transferred to the phosphoryl carrier protein HPr by enzyme I. Phospho-HPr then transfers it to the PTS EIIA domain. Is involved in fructose transport. This is Phosphocarrier protein HPr (ptsH1) from Haloferax volcanii (strain ATCC 29605 / DSM 3757 / JCM 8879 / NBRC 14742 / NCIMB 2012 / VKM B-1768 / DS2) (Halobacterium volcanii).